Consider the following 417-residue polypeptide: Serine hydroxymethyltransferase (417 aa).

Residues L121 and 125–127 each bind (6S)-5,6,7,8-tetrahydrofolate; that span reads GHL. An N6-(pyridoxal phosphate)lysine modification is found at K229. 355 to 357 contacts (6S)-5,6,7,8-tetrahydrofolate; it reads SPF.

The protein belongs to the SHMT family. Homodimer. Pyridoxal 5'-phosphate is required as a cofactor.

The protein resides in the cytoplasm. The enzyme catalyses (6R)-5,10-methylene-5,6,7,8-tetrahydrofolate + glycine + H2O = (6S)-5,6,7,8-tetrahydrofolate + L-serine. The protein operates within one-carbon metabolism; tetrahydrofolate interconversion. Its pathway is amino-acid biosynthesis; glycine biosynthesis; glycine from L-serine: step 1/1. Catalyzes the reversible interconversion of serine and glycine with tetrahydrofolate (THF) serving as the one-carbon carrier. This reaction serves as the major source of one-carbon groups required for the biosynthesis of purines, thymidylate, methionine, and other important biomolecules. Also exhibits THF-independent aldolase activity toward beta-hydroxyamino acids, producing glycine and aldehydes, via a retro-aldol mechanism. The sequence is that of Serine hydroxymethyltransferase from Proteus mirabilis (strain HI4320).